A 712-amino-acid polypeptide reads, in one-letter code: MMRNRSKSPRRPSPTSRAANCDVDLLKSTARDREELKCMLEKYERHLAEIQGNVKVLTSVRDKTFLLYEQAQEEIARLRREMMKSCQSPKSTTAHAILRRVETERDVAFTDLRRMTTARDSLRERLKIAQAFNEKAHLEQRIEELECTVHNLDDERMEQMSNMTLMKETITIVEKEMKSLARKAMDTESELGRQKAENNSLRLLYENTEKDLSDTQRHLAKKKYELQLTQEKIMCLDEKIDNFTRQNIAQREEISILGATLNDLAKEKECLQTCLDKKSENIASLGESLAMKEKTISGMKNIIAEMEQASRQSTEALIMCEQDISRMRRQLDETNDELGQIARERDILAHENDNLQEQFAKVKQENQALSKKLNDTHNELSDIKQKVQDTNLEVNKLKNILKSEESTNLEVNKLKNILKSEESENRQIMEQLRKANEDAENWENKARQLEAENNTLKLELITAEAEGNRLKEKVDALNREVEQHLNAERSYKSQIATLHKSLVKMEEELQKVQFEKVSALADLSSTRELCIKLDSSKELLNRQLVAKDQEIEMMENELDSARSEIELLRSQMTNERISMQNLEALLVANRDKEYQSQIALQEKESEIQLLKEHLCLAENKMAIQSRDVAQFRNVVTQLEADLDITKRQLGTERFERERAVQELRRQNYSSNAYHLGSMKPNTKCHSPERAHHRSPDRDLDRSLEENLCYRDF.

A Phosphoserine modification is found at Ser161. Residues 571-703 (QMTNERISMQ…SPDRDLDRSL (133 aa)) are interaction with HIF1A. Residues 673–699 (YHLGSMKPNTKCHSPERAHHRSPDRDL) are disordered. Over residues 685 to 699 (HSPERAHHRSPDRDL) the composition is skewed to basic and acidic residues. Ser702 bears the Phosphoserine mark.

This sequence belongs to the CEP135/TSGA10 family. As to quaternary structure, interacts with HIF1A. In terms of processing, processed into N-terminal 27-kDa and C-terminal 55-kDa fragments. Expressed in testis, predominantly in elongated spermatids (at protein level). Detected in spermatocytes only at the mRNA, but not at the protein level.

It localises to the cytoplasm. It is found in the cytoskeleton. The protein localises to the microtubule organizing center. The protein resides in the centrosome. Its subcellular location is the centriole. In terms of biological role, plays a role in spermatogenesis. When overexpressed, prevents nuclear localization of HIF1A. This Rattus norvegicus (Rat) protein is Testis-specific gene 10 protein (Tsga10).